The following is a 478-amino-acid chain: Membrane-bound lytic murein transglycosylase F (478 aa).

An N-terminal signal peptide occupies residues 1 to 22; sequence MTRFLFAIILGFLLTACQQVTV. Residues 23–257 form a non-LT domain region; the sequence is EETEYVPHKL…HLNEKYFGHV (235 aa). The LT domain stretch occupies residues 258–478; sequence KRFDYIDTRA…PGTLSPDKPK (221 aa). Residue Glu-302 is part of the active site. Residues 446–478 form a disordered region; it reads SKQQNSDEEEPSDLASEDGPAPVPGTLSPDKPK. Residues 451–461 show a composition bias toward acidic residues; it reads SDEEEPSDLAS.

In the N-terminal section; belongs to the bacterial solute-binding protein 3 family. The protein in the C-terminal section; belongs to the transglycosylase Slt family.

The protein localises to the cell outer membrane. It carries out the reaction Exolytic cleavage of the (1-&gt;4)-beta-glycosidic linkage between N-acetylmuramic acid (MurNAc) and N-acetylglucosamine (GlcNAc) residues in peptidoglycan, from either the reducing or the non-reducing ends of the peptidoglycan chains, with concomitant formation of a 1,6-anhydrobond in the MurNAc residue.. Functionally, murein-degrading enzyme that degrades murein glycan strands and insoluble, high-molecular weight murein sacculi, with the concomitant formation of a 1,6-anhydromuramoyl product. Lytic transglycosylases (LTs) play an integral role in the metabolism of the peptidoglycan (PG) sacculus. Their lytic action creates space within the PG sacculus to allow for its expansion as well as for the insertion of various structures such as secretion systems and flagella. This Shewanella sp. (strain ANA-3) protein is Membrane-bound lytic murein transglycosylase F.